The sequence spans 481 residues: Glutamate--glyoxylate aminotransferase 2 (481 aa).

Position 291 is an N6-(pyridoxal phosphate)lysine (Lys-291). Residues 479–481 carry the Peroxisomal targeting signal motif; the sequence is SRM.

This sequence belongs to the class-I pyridoxal-phosphate-dependent aminotransferase family. Alanine aminotransferase subfamily. In terms of assembly, homodimer. The cofactor is pyridoxal 5'-phosphate. Post-translationally, the N-terminus is blocked. As to expression, expressed at low levels in seedlings, leaves, flowers, roots, and green siliques.

The protein localises to the peroxisome. It catalyses the reaction L-alanine + 2-oxoglutarate = pyruvate + L-glutamate. The catalysed reaction is glyoxylate + L-alanine = glycine + pyruvate. The enzyme catalyses glycine + 2-oxoglutarate = glyoxylate + L-glutamate. The protein operates within photosynthesis; C4 acid pathway. Its pathway is amino-acid degradation; L-alanine degradation via transaminase pathway; pyruvate from L-alanine: step 1/1. In terms of biological role, catalyzes the Glu:glyoxylate aminotransferase (GGT), Ala:glyoxylate aminotransferase (AGT), Ala:2-oxoglutarate aminotransferase (AKT) and Glu:pyruvate aminotransferase (GPT) reactions in peroxisomes. The polypeptide is Glutamate--glyoxylate aminotransferase 2 (GGAT2) (Arabidopsis thaliana (Mouse-ear cress)).